The chain runs to 152 residues: Xanthine-guanine phosphoribosyltransferase (152 aa).

5-phospho-alpha-D-ribose 1-diphosphate contacts are provided by residues 37 to 38, Arg69, and 88 to 96; these read RG and DDLVDTGGT. Arg69 serves as a coordination point for GMP. Asp89 is a binding site for Mg(2+). 2 residues coordinate guanine: Asp92 and Ile135. The xanthine site is built by Asp92 and Ile135. Residues 92 to 96 and 134 to 135 contribute to the GMP site; these read DTGGT and WI.

The protein belongs to the purine/pyrimidine phosphoribosyltransferase family. XGPT subfamily. Homotetramer. Requires Mg(2+) as cofactor.

Its subcellular location is the cell inner membrane. The catalysed reaction is GMP + diphosphate = guanine + 5-phospho-alpha-D-ribose 1-diphosphate. It catalyses the reaction XMP + diphosphate = xanthine + 5-phospho-alpha-D-ribose 1-diphosphate. It carries out the reaction IMP + diphosphate = hypoxanthine + 5-phospho-alpha-D-ribose 1-diphosphate. It participates in purine metabolism; GMP biosynthesis via salvage pathway; GMP from guanine: step 1/1. The protein operates within purine metabolism; XMP biosynthesis via salvage pathway; XMP from xanthine: step 1/1. Its function is as follows. Purine salvage pathway enzyme that catalyzes the transfer of the ribosyl-5-phosphate group from 5-phospho-alpha-D-ribose 1-diphosphate (PRPP) to the N9 position of the 6-oxopurines guanine and xanthine to form the corresponding ribonucleotides GMP (guanosine 5'-monophosphate) and XMP (xanthosine 5'-monophosphate), with the release of PPi. To a lesser extent, also acts on hypoxanthine. The chain is Xanthine-guanine phosphoribosyltransferase from Escherichia coli O7:K1 (strain IAI39 / ExPEC).